Consider the following 206-residue polypeptide: MKPFTVLNGIAALLDRPNVDTDQIIPKQFLRKIERTGFGVHLFHDWRYLDDAGTKLNPEFSLNQERYKGASILLTRDNFGCGSSREHAPWALEDYGFRSIIAPSYADIFFNNCFKNGMLPVVLKSEEVEELFRSVSGNVGAKLQIDLDKQTVTGPTGKVYTFEVDSFRKYCLYNGLDDIGLTLKQGSKIGAFEKKQKEVEPWLYVI.

It belongs to the LeuD family. LeuD type 1 subfamily. As to quaternary structure, heterodimer of LeuC and LeuD.

The catalysed reaction is (2R,3S)-3-isopropylmalate = (2S)-2-isopropylmalate. Its pathway is amino-acid biosynthesis; L-leucine biosynthesis; L-leucine from 3-methyl-2-oxobutanoate: step 2/4. Functionally, catalyzes the isomerization between 2-isopropylmalate and 3-isopropylmalate, via the formation of 2-isopropylmaleate. This is 3-isopropylmalate dehydratase small subunit from Leptospira borgpetersenii serovar Hardjo-bovis (strain L550).